The primary structure comprises 103 residues: MYAIIETGGKQFRVEEGLELNVQKMDAEAGTKVDLDKILLIGQGEDVKIGAPYVEGAKVSCTVVEHGRDKKIVVFKKRRRKDSQTKQGHRQDYTRIKVEAIQA.

This sequence belongs to the bacterial ribosomal protein bL21 family. Part of the 50S ribosomal subunit. Contacts protein L20.

Functionally, this protein binds to 23S rRNA in the presence of protein L20. This Maridesulfovibrio salexigens (strain ATCC 14822 / DSM 2638 / NCIMB 8403 / VKM B-1763) (Desulfovibrio salexigens) protein is Large ribosomal subunit protein bL21.